The sequence spans 69 residues: Protein transport protein Sec61 subunit gamma-3 (69 aa).

The residue at position 1 (Met-1) is an N-acetylmethionine. At 1 to 32 the chain is on the cytoplasmic side; the sequence is MEAIDSAIDPLRDFAKSSVRLVQRCHKPDRKE. Residues 33–61 traverse the membrane as a helical segment; the sequence is FTKVAVRTAIGFVVMGFVGFFVKLVFIPI. The Extracellular segment spans residues 62-69; that stretch reads NNIIVGSS.

This sequence belongs to the SecE/SEC61-gamma family. As to quaternary structure, heterotrimeric complex composed of SEC61-alpha, SEC61-beta and SEC61-gamma.

It is found in the endoplasmic reticulum membrane. Its function is as follows. Necessary for protein translocation in the endoplasmic reticulum. This Arabidopsis thaliana (Mouse-ear cress) protein is Protein transport protein Sec61 subunit gamma-3 (SEC61G3).